The following is a 593-amino-acid chain: AT-rich interactive domain-containing protein 3A (593 aa).

Residues 14–222 (QQRARQELEA…PQLQPPDHGD (209 aa)) form a disordered region. Positions 41–53 (AAPDEDREPESAR) are enriched in basic and acidic residues. Positions 54 to 87 (MQRAQMAALAAMRAAAAGLGHPASPGGSEDGPPG) are enriched in low complexity. Phosphoserine occurs at positions 77, 81, and 88. Thr98 carries the post-translational modification Phosphothreonine. Phosphoserine occurs at positions 101 and 119. Basic and acidic residues predominate over residues 104–127 (RGREGPGEEHFEDMASDEDMKPKW). An acidic region spans residues 119-156 (SDEDMKPKWEEEEMEEDLGEDEEEEEEDYEDEEEEEDE). Residues 128-158 (EEEEMEEDLGEDEEEEEEDYEDEEEEEDEEG) are compositionally biased toward acidic residues. An ARID domain is found at 238-330 (DPKRKEFLDD…YLYPYECEKR (93 aa)). Phosphoserine occurs at positions 353 and 362. Glycyl lysine isopeptide (Lys-Gly) (interchain with G-Cter in SUMO2) cross-links involve residues Lys398, Lys399, Lys452, and Lys462. The region spanning 444 to 541 (AALEQLREKL…GVLFAQPPAP (98 aa)) is the REKLES domain. The interval 445–488 (ALEQLREKLESAEPPEKKMALVADEQQRLMQRALQQNFLAMAAQ) is important for nuclear localization. A homodimerization region spans residues 490–513 (PMSIRINSQASESRQDSAVNLTGT). Disordered regions lie at residues 497 to 516 (SQASESRQDSAVNLTGTNGS) and 539 to 593 (PAPT…NSLP). The segment at 537 to 557 (QPPAPTPTSAPNKGGGGGGGS) is important for cytoplasmic localization. Residues 549–576 (KGGGGGGGSSSNAGGRGGNTGTSGGQAG) are compositionally biased toward gly residues. The segment covering 580 to 593 (LSTPSTSTSNNSLP) has biased composition (low complexity).

In terms of assembly, homodimer. Heterodimer with ARID3B. Interacts with E2F1. Interacts with GTF2I and BTK. As to expression, widely expressed, with highest expression in skeletal muscle, thalamus, and colon.

The protein localises to the nucleus. It localises to the cytoplasm. Functionally, transcription factor which may be involved in the control of cell cycle progression by the RB1/E2F1 pathway and in B-cell differentiation. The protein is AT-rich interactive domain-containing protein 3A (ARID3A) of Homo sapiens (Human).